The following is a 197-amino-acid chain: ADP-ribosylation factor-like protein 16 (197 aa).

GTP contacts are provided by residues 30–37 (GATGVGKT), 82–86 (ELGGC), and 139–142 (NKID).

The protein belongs to the small GTPase superfamily. Arf family. In terms of assembly, interacts with RIGI; this interaction is GTP-dependent and induced upon viral infection; this interaction suppresses the RNA sensing activity of RIGI.

The protein resides in the cytoplasm. In terms of biological role, may suppress the RNA sensing activity of RIGI in a GTP-dependent. The chain is ADP-ribosylation factor-like protein 16 from Homo sapiens (Human).